The sequence spans 129 residues: Small ribosomal subunit protein uS11 (129 aa).

Belongs to the universal ribosomal protein uS11 family. As to quaternary structure, part of the 30S ribosomal subunit. Interacts with proteins S7 and S18. Binds to IF-3.

Its function is as follows. Located on the platform of the 30S subunit, it bridges several disparate RNA helices of the 16S rRNA. Forms part of the Shine-Dalgarno cleft in the 70S ribosome. The chain is Small ribosomal subunit protein uS11 from Aliivibrio fischeri (strain ATCC 700601 / ES114) (Vibrio fischeri).